We begin with the raw amino-acid sequence, 709 residues long: MNPIVKQFKYGQHTVTLETGAIARQATAAVMASMDDTTVFVTVVAKKDVKEGQDFFPLTVNYQERTYAAGKIPGGFFKREGRPSEGETLIARLIDRPIRPLFPEGFFNEIQVVATVVSVNPQISPDLVAMIGASAALTLSGVPFNGPIGAARVGFIDNQFVLNPTMAEQKQSRLDLVVAGTDKAVLMVESEADILTEEQMLAAVVFGHQQQQVVIEAVKEFAKEAGKPRWDWVAPQPNTDLINKVKAIAEARLGDAYRITEKQARYEQIDAIKADVIAQITAEDEEISESKIVDIFTALESQIVRGRIIAGEPRIDGRTVDTVRALDICTGVLPRTHGSAIFTRGETQALAVATLGTERDAQIIDELTGERQDHFLFHYNFPPYSVGETGMIGSPKRREIGHGRLAKRGVAAVMPSLAEFPYVVRVVSEITESNGSSSMASVCGASLALMDAGVPIKAAVAGIAMGLVKEEEKFVVLSDILGDEDHLGDMDFKVAGTREGVTALQMDIKIEGITPEIMQIALNQAKSARMHILGVMEQAIPAPRADISDYAPRIYTMKIDPKKIKDVIGKGGATIRSLTEETGTSIDIDDDGTVKIAAVDSNAAKNVMGRIEEIVAEVEAGAIYKGKVTRLADFGAFVAIVGNKEGLVHISQIAEERVEKVSDYLQVGQEVNVKVVEIDRQGRIRLTMKDLAPKQETEINQEDPVEEQE.

Residues Asp485 and Asp491 each contribute to the Mg(2+) site. Residues 552–611 (PRIYTMKIDPKKIKDVIGKGGATIRSLTEETGTSIDIDDDGTVKIAAVDSNAAKNVMGRI) enclose the KH domain. One can recognise an S1 motif domain in the interval 621 to 689 (GAIYKGKVTR…RQGRIRLTMK (69 aa)).

It belongs to the polyribonucleotide nucleotidyltransferase family. As to quaternary structure, component of the RNA degradosome, which is a multiprotein complex involved in RNA processing and mRNA degradation. The cofactor is Mg(2+).

Its subcellular location is the cytoplasm. The enzyme catalyses RNA(n+1) + phosphate = RNA(n) + a ribonucleoside 5'-diphosphate. Involved in mRNA degradation. Catalyzes the phosphorolysis of single-stranded polyribonucleotides processively in the 3'- to 5'-direction. This chain is Polyribonucleotide nucleotidyltransferase, found in Haemophilus influenzae (strain 86-028NP).